A 126-amino-acid chain; its full sequence is Probable cystatin-16 (126 aa).

The N-terminal stretch at 1–20 (MFLKATLLLGLAVLGMHVWA) is a signal peptide. Cysteines 84 and 94 form a disulfide. Asn106 carries an N-linked (GlcNAc...) asparagine glycan.

It belongs to the cystatin family.

It localises to the secreted. This chain is Probable cystatin-16, found in Bos taurus (Bovine).